A 548-amino-acid polypeptide reads, in one-letter code: Tylosin resistance ATP-binding protein TlrC (548 aa).

ABC transporter domains are found at residues 9–265 (LSLH…RRRQ) and 347–547 (IATA…VSGA). Residues 41-48 (GDNGAGKS) and 387-394 (GPNGAGKS) contribute to the ATP site.

The protein belongs to the ABC transporter superfamily.

Its subcellular location is the cell membrane. Functionally, responsible for tylosin resistance, and is proposed to be a subunit of a multicomponent export system for the energy-dependent efflux of tylosin. In Streptomyces fradiae (Streptomyces roseoflavus), this protein is Tylosin resistance ATP-binding protein TlrC (tlrC).